Consider the following 134-residue polypeptide: Large ribosomal subunit protein eL14 (134 aa).

It belongs to the eukaryotic ribosomal protein eL14 family. Component of the large ribosomal subunit (LSU). Mature yeast ribosomes consist of a small (40S) and a large (60S) subunit. The 40S small subunit contains 1 molecule of ribosomal RNA (18S rRNA) and at least 33 different proteins. The large 60S subunit contains 3 rRNA molecules (25S, 5.8S and 5S rRNA) and at least 46 different proteins.

It localises to the cytoplasm. It is found in the nucleus. In terms of biological role, component of the ribosome, a large ribonucleoprotein complex responsible for the synthesis of proteins in the cell. The small ribosomal subunit (SSU) binds messenger RNAs (mRNAs) and translates the encoded message by selecting cognate aminoacyl-transfer RNA (tRNA) molecules. The large subunit (LSU) contains the ribosomal catalytic site termed the peptidyl transferase center (PTC), which catalyzes the formation of peptide bonds, thereby polymerizing the amino acids delivered by tRNAs into a polypeptide chain. The nascent polypeptides leave the ribosome through a tunnel in the LSU and interact with protein factors that function in enzymatic processing, targeting, and the membrane insertion of nascent chains at the exit of the ribosomal tunnel. This chain is Large ribosomal subunit protein eL14 (rpl14), found in Schizosaccharomyces pombe (strain 972 / ATCC 24843) (Fission yeast).